The primary structure comprises 564 residues: Acetylcholine receptor subunit alpha-type deg-3 (564 aa).

An N-terminal signal peptide occupies residues 1-20; the sequence is MTLKIRTIIILFCVISVTTT. The Extracellular portion of the chain corresponds to 21–268; the sequence is SQSLNATLKT…SLVIQRKPLY (248 aa). 4 N-linked (GlcNAc...) asparagine glycosylation sites follow: Asn25, Asn37, Asn125, and Asn198. 2 disulfide bridges follow: Cys185–Cys199 and Cys248–Cys249. The next 3 membrane-spanning stretches (helical) occupy residues 269–289, 302–319, and 329–353; these read YLVNLIIPTSIITLVAITGFF, INLGITTLLAMSILMLMV, and FVPLIAWFYLSIIIIISIGTFLTSV. Residues 354-526 are Cytoplasmic-facing; the sequence is VLSVQGRRQY…WEFLATVLDR (173 aa). The chain crosses the membrane as a helical span at residues 527–547; that stretch reads FLLIVFVGAVVIVTAGLILVG.

This sequence belongs to the ligand-gated ion channel (TC 1.A.9) family. Acetylcholine receptor (TC 1.A.9.1) subfamily. As to quaternary structure, the functional receptor is a heteromer of deg-3 and des-2. Interacts with ric-3; which is required for proper receptor folding.

The protein localises to the postsynaptic cell membrane. Its subcellular location is the cell membrane. In terms of biological role, subunit of the non-synaptic neuronal acetylcholine receptor, which may play a role in chemotaxis towards choline. After binding choline or acetylcholine, the AChR responds by an extensive change in conformation that affects all subunits and leads to opening of an ion-conducting channel across the plasma membrane. The sequence is that of Acetylcholine receptor subunit alpha-type deg-3 (deg-3) from Caenorhabditis elegans.